We begin with the raw amino-acid sequence, 273 residues long: MAKHLYKTPIPSTRKGTVDRQVKSNPRNKLIHGRHRCGKGRNARGIITARHRGGGHKRLYRKIDFRRNQKDISGRIITIEYDPNRNAYICLIHYGDGEKRYILHPRGAIIGDTIVSGTKVPISMGNALPLTDMPLGTAIHNIEITRGRGGQLARAAGAVAKLIAKEGKLATLRLPSGEVRLVSQNCLATVGQVGNVGVNQKSLGRAGSKCWLGKRPVVRGVVMNPVDHPHGGGEGKAPIGRKKPTTPWGYPALGRRTRKRKKYSDSFILRRRK.

Disordered stretches follow at residues 1–22 and 225–273; these read MAKH…DRQV and PVDH…RRRK.

It belongs to the universal ribosomal protein uL2 family. As to quaternary structure, part of the 50S ribosomal subunit.

It is found in the plastid. The protein localises to the chloroplast. The chain is Large ribosomal subunit protein uL2cz/uL2cy (rpl2-A) from Zea mays (Maize).